The primary structure comprises 439 residues: MTQFLPPNLLALFAPRDPIPYLPPLEKLPHEKHHNQPYCGIAPYIREFEDPRDAPPPTRAETREERMERKRREKIERRQQEVETELKMWDPHNDPNAQGDAFKTLFVARVNYDTTESKLRREFEVYGPIKRIHMVYSKRSGKPRGYAFIEYEHERDMHSAYKHADGKKIDGRRVLVDVERGRTVKGWRPRRLGGGLGGTRRGGADVNIRHSGRDDTSRYDERPGPSPLPHRDRDRDRERERRERSRERDKERERRRSRSRDRRRRSRSRDKEERRRSRERSKDKDRDRKRRSSRSRERARRERERKEELRGGGGGGGDMAEPSEAGDAPPDDGPPGELGPDGPDGPEEKGRDRDRDRRRSHRSERERRRDRDRDRDREHKRGERGGDRGRDEARGGGGGGQDNGLEGLGNDGRDMYMESEGGDGYLAPENGYLMEAAPE.

At Thr-2 the chain carries N-acetylthreonine. The segment at 48–79 is disordered; the sequence is FEDPRDAPPPTRAETREERMERKRREKIERRQ. Residues 60–79 are compositionally biased toward basic and acidic residues; sequence AETREERMERKRREKIERRQ. The interval 92–202 is required for interaction with U1 RNA; it reads HNDPNAQGDA…GGGLGGTRRG (111 aa). Residues 103–181 enclose the RRM domain; it reads KTLFVARVNY…RRVLVDVERG (79 aa). Lys-118 carries the N6-acetyllysine modification. At Tyr-126 the chain carries Phosphotyrosine. Residues 187–439 form a disordered region; the sequence is WRPRRLGGGL…NGYLMEAAPE (253 aa). Gly residues predominate over residues 192-201; the sequence is LGGGLGGTRR. Basic and acidic residues predominate over residues 207–254; the sequence is NIRHSGRDDTSRYDERPGPSPLPHRDRDRDRERERRERSRERDKERER. 2 positions are modified to phosphoserine: Ser-226 and Ser-268. Residues 255-268 show a composition bias toward basic residues; the sequence is RRSRSRDRRRRSRS. Basic and acidic residues-rich tracts occupy residues 269–286 and 294–310; these read RDKE…DKDR and RSRE…EELR. Position 323 is a phosphoserine (Ser-323). The segment covering 346 to 394 has biased composition (basic and acidic residues); the sequence is PEEKGRDRDRDRRRSHRSERERRRDRDRDRDREHKRGERGGDRGRDEAR. A Glycyl lysine isopeptide (Lys-Gly) (interchain with G-Cter in SUMO2) cross-link involves residue Lys-349. The span at 395–410 shows a compositional bias: gly residues; the sequence is GGGGGGQDNGLEGLGN.

As to quaternary structure, component of the U1 snRNP. The U1 snRNP is composed of the U1 snRNA and the 7 core Sm proteins SNRPB, SNRPD1, SNRPD2, SNRPD3, SNRPE, SNRPF and SNRPG that assemble in a heptameric protein ring on the Sm site of the small nuclear RNA to form the core snRNP, and at least three U1 snRNP-specific proteins SNRNP70/U1-70K, SNRPA/U1-A and SNRPC/U1-C. Interacts with SCNM1. Found in a pre-mRNA splicing complex with SFRS4, SFRS5, SNRNP70, SNRPA1, SRRM1 and SRRM2. Found in a pre-mRNA exonic splicing enhancer (ESE) complex with SNRNP70, SNRPA1, SRRM1 and TRA2B/SFRS10. Interacts with dephosphorylated SFRS13A and SFPQ. Interacts with NUDT21/CPSF5, CPSF6, SCAF11, and ZRANB2. Interacts with GEMIN5. Interacts with FUS. Post-translationally, extensively phosphorylated on serine residues in the C-terminal region.

The protein resides in the nucleus speckle. The protein localises to the nucleus. It is found in the nucleoplasm. Its function is as follows. Component of the spliceosomal U1 snRNP, which is essential for recognition of the pre-mRNA 5' splice-site and the subsequent assembly of the spliceosome. SNRNP70 binds to the loop I region of U1-snRNA. The sequence is that of U1 small nuclear ribonucleoprotein 70 kDa (SNRNP70) from Bos taurus (Bovine).